A 150-amino-acid chain; its full sequence is Large ribosomal subunit protein uL13 (150 aa).

The disordered stretch occupies residues 130–150; sequence EHPHAAQQPKTLQLDPAASAQ.

It belongs to the universal ribosomal protein uL13 family. As to quaternary structure, part of the 50S ribosomal subunit.

In terms of biological role, this protein is one of the early assembly proteins of the 50S ribosomal subunit, although it is not seen to bind rRNA by itself. It is important during the early stages of 50S assembly. The polypeptide is Large ribosomal subunit protein uL13 (Synechococcus sp. (strain CC9311)).